A 454-amino-acid chain; its full sequence is Lipase member H (454 aa).

The first 23 residues, 1-23, serve as a signal peptide directing secretion; it reads MIYRKIIWGILYVTLMLFDTHRA. N-linked (GlcNAc...) asparagine glycosylation is found at Asn73, Asn137, and Asn151. Ser161 functions as the Nucleophile in the catalytic mechanism. The Charge relay system role is filled by Asp185. A disulfide bridge connects residues Cys240 and Cys253. His255 functions as the Charge relay system in the catalytic mechanism. N-linked (GlcNAc...) asparagine glycosylation is present at Asn267. 2 cysteine pairs are disulfide-bonded: Cys277-Cys288 and Cys291-Cys299. Asn358 is a glycosylation site (N-linked (GlcNAc...) asparagine). A disulfide bridge links Cys430 with Cys449.

Belongs to the AB hydrolase superfamily. Lipase family.

The protein resides in the secreted. Its subcellular location is the cell membrane. The catalysed reaction is 1-hexadecanoyl-2-(9Z-octadecenoyl)-sn-glycero-3-phosphate + H2O = 2-(9Z-octadecenoyl)-sn-glycero-3-phosphate + hexadecanoate + H(+). Functionally, hydrolyzes specifically phosphatidic acid (PA) to produce 2-acyl lysophosphatidic acid (LPA; a potent bioactive lipid mediator) and fatty acid. Does not hydrolyze other phospholipids, like phosphatidylserine (PS), phosphatidylcholine (PC) and phosphatidylethanolamine (PE) or triacylglycerol (TG). This Danio rerio (Zebrafish) protein is Lipase member H (liph).